The chain runs to 210 residues: Orotate phosphoribosyltransferase (210 aa).

5-phospho-alpha-D-ribose 1-diphosphate-binding positions include Arg-96, Lys-100, His-102, and 122–130 (EDLISTGGS). Position 126 (Ser-126) interacts with orotate.

It belongs to the purine/pyrimidine phosphoribosyltransferase family. PyrE subfamily. As to quaternary structure, homodimer. It depends on Mg(2+) as a cofactor.

It catalyses the reaction orotidine 5'-phosphate + diphosphate = orotate + 5-phospho-alpha-D-ribose 1-diphosphate. It functions in the pathway pyrimidine metabolism; UMP biosynthesis via de novo pathway; UMP from orotate: step 1/2. Catalyzes the transfer of a ribosyl phosphate group from 5-phosphoribose 1-diphosphate to orotate, leading to the formation of orotidine monophosphate (OMP). The protein is Orotate phosphoribosyltransferase (pyrE) of Streptococcus pneumoniae serotype 19F (strain G54).